Reading from the N-terminus, the 104-residue chain is Large ribosomal subunit protein uL24 (104 aa).

Over residues 82-92 (RIGYRTDENGK) the composition is skewed to basic and acidic residues. The disordered stretch occupies residues 82–104 (RIGYRTDENGKRVRISRRNGKDI). The span at 93-104 (RVRISRRNGKDI) shows a compositional bias: basic residues.

Belongs to the universal ribosomal protein uL24 family. As to quaternary structure, part of the 50S ribosomal subunit.

One of two assembly initiator proteins, it binds directly to the 5'-end of the 23S rRNA, where it nucleates assembly of the 50S subunit. In terms of biological role, one of the proteins that surrounds the polypeptide exit tunnel on the outside of the subunit. The protein is Large ribosomal subunit protein uL24 of Nocardia farcinica (strain IFM 10152).